A 449-amino-acid polypeptide reads, in one-letter code: Trigger factor (449 aa).

A PPIase FKBP-type domain is found at 172–257 (GDRVTVDFVG…LKQVEWAHLP (86 aa)).

The protein belongs to the FKBP-type PPIase family. Tig subfamily.

Its subcellular location is the cytoplasm. The enzyme catalyses [protein]-peptidylproline (omega=180) = [protein]-peptidylproline (omega=0). Functionally, involved in protein export. Acts as a chaperone by maintaining the newly synthesized protein in an open conformation. Functions as a peptidyl-prolyl cis-trans isomerase. The chain is Trigger factor from Ralstonia nicotianae (strain ATCC BAA-1114 / GMI1000) (Ralstonia solanacearum).